The sequence spans 943 residues: Translation initiation factor IF-2 (943 aa).

The segment at 35–359 (MSSIDQDQEA…MPQRKERPLP (325 aa)) is disordered. A compositionally biased stretch (low complexity) spans 57 to 76 (KAPSSQAAKTPAKAAKTSSA). Composition is skewed to basic and acidic residues over residues 92–103 (SNDHADAAEHSQ) and 110–124 (AKQENKPARSNKTSD). Polar residues predominate over residues 130–141 (SKSTILRPRSTQ). A compositionally biased stretch (low complexity) spans 142-190 (TAHTNTNHNRGGNTASANNTANGRNSNRSNNNNNNRSANNANRSGNNNR). Composition is skewed to basic and acidic residues over residues 191–205 (SNERNRNDRNRRFDN), 239–250 (ASERQQPKRQEA), and 259–271 (KRSEQPRTERPRT). Low complexity-rich tracts occupy residues 289–299 (PAAAAPKPASA) and 315–330 (NFGRSNSYGNRNGFNR). Over residues 331–342 (NNRRNKKNKRRQ) the composition is skewed to basic residues. Over residues 346–358 (PKKEMPQRKERPL) the composition is skewed to basic and acidic residues. Residues 444-613 (PRPPVVTIMG…LLEADVLELK (170 aa)) form the tr-type G domain. The segment at 453–460 (GHVDHGKT) is G1. 453 to 460 (GHVDHGKT) is a binding site for GTP. Residues 478-482 (GITQH) form a G2 region. The tract at residues 499-502 (DTPG) is G3. GTP contacts are provided by residues 499–503 (DTPGH) and 553–556 (NKID). A G4 region spans residues 553 to 556 (NKID). The tract at residues 589–591 (SAK) is G5.

The protein belongs to the TRAFAC class translation factor GTPase superfamily. Classic translation factor GTPase family. IF-2 subfamily.

The protein localises to the cytoplasm. Its function is as follows. One of the essential components for the initiation of protein synthesis. Protects formylmethionyl-tRNA from spontaneous hydrolysis and promotes its binding to the 30S ribosomal subunits. Also involved in the hydrolysis of GTP during the formation of the 70S ribosomal complex. This chain is Translation initiation factor IF-2, found in Lacticaseibacillus paracasei (strain ATCC 334 / BCRC 17002 / CCUG 31169 / CIP 107868 / KCTC 3260 / NRRL B-441) (Lactobacillus paracasei).